We begin with the raw amino-acid sequence, 92 residues long: Small ribosomal subunit protein uS19c (92 aa).

This sequence belongs to the universal ribosomal protein uS19 family.

The protein localises to the plastid. It is found in the chloroplast. Its function is as follows. Protein S19 forms a complex with S13 that binds strongly to the 16S ribosomal RNA. The protein is Small ribosomal subunit protein uS19c of Cucumis sativus (Cucumber).